The primary structure comprises 42 residues: Large ribosomal subunit protein bL36 (42 aa).

This sequence belongs to the bacterial ribosomal protein bL36 family.

The chain is Large ribosomal subunit protein bL36 from Anaplasma phagocytophilum (strain HZ).